The primary structure comprises 30 residues: Ornithine carbamoyltransferase (30 aa).

Belongs to the aspartate/ornithine carbamoyltransferase superfamily. OTCase family.

The protein resides in the cytoplasm. It carries out the reaction carbamoyl phosphate + L-ornithine = L-citrulline + phosphate + H(+). Its pathway is amino-acid biosynthesis; L-arginine biosynthesis; L-arginine from L-ornithine and carbamoyl phosphate: step 1/3. Its function is as follows. Has vitronectin and fibronectin-binding activity. The protein is Ornithine carbamoyltransferase (argF) of Staphylococcus epidermidis.